Reading from the N-terminus, the 194-residue chain is CASP-like protein 2D1 (194 aa).

Basic and acidic residues predominate over residues 1 to 16 (MRDNNNNNTREEERSS). The segment at 1–26 (MRDNNNNNTREEERSSSSKQQQPQAP) is disordered. Topologically, residues 1-30 (MRDNNNNNTREEERSSSSKQQQPQAPMSLK) are cytoplasmic. The helical transmembrane segment at 31–51 (IIDSCLRLSVVPLSVATIWLT) threads the bilayer. Residues 52-74 (VTNHESNPDYGNLEYNSIMGLKY) lie on the Extracellular side of the membrane. Residues 75–95 (MVGVSAISAIYALLSTVSSWV) traverse the membrane as a helical segment. Residues 96 to 110 (TCLVSKAWLFFIPDQ) lie on the Cytoplasmic side of the membrane. A helical transmembrane segment spans residues 111–133 (VLAYVMTTSVAGATEIVYLLNKG). Residues 134 to 152 (DKIVTWSEMCSSYPHYCSK) lie on the Extracellular side of the membrane. Residues 153 to 173 (LTIALGLHVFVLFFFLFLSVI) form a helical membrane-spanning segment. The Cytoplasmic segment spans residues 174-194 (SAYRAFSPFDPPCDSQTNNDA).

The protein belongs to the Casparian strip membrane proteins (CASP) family. Homodimer and heterodimers.

Its subcellular location is the cell membrane. The polypeptide is CASP-like protein 2D1 (Arabidopsis thaliana (Mouse-ear cress)).